Here is a 379-residue protein sequence, read N- to C-terminus: Histidinol-phosphate aminotransferase (379 aa).

An N6-(pyridoxal phosphate)lysine modification is found at lysine 231.

This sequence belongs to the class-II pyridoxal-phosphate-dependent aminotransferase family. Histidinol-phosphate aminotransferase subfamily. As to quaternary structure, homodimer. Pyridoxal 5'-phosphate serves as cofactor.

It catalyses the reaction L-histidinol phosphate + 2-oxoglutarate = 3-(imidazol-4-yl)-2-oxopropyl phosphate + L-glutamate. The protein operates within amino-acid biosynthesis; L-histidine biosynthesis; L-histidine from 5-phospho-alpha-D-ribose 1-diphosphate: step 7/9. The chain is Histidinol-phosphate aminotransferase from Mycolicibacterium smegmatis (strain ATCC 700084 / mc(2)155) (Mycobacterium smegmatis).